Consider the following 196-residue polypeptide: Imidazole glycerol phosphate synthase subunit HisH (196 aa).

A Glutamine amidotransferase type-1 domain is found at 2-196; that stretch reads KVAVIKYNAG…ERIIKNFLEL (195 aa). Cysteine 77 serves as the catalytic Nucleophile. Active-site residues include histidine 178 and glutamate 180.

In terms of assembly, heterodimer of HisH and HisF.

Its subcellular location is the cytoplasm. It carries out the reaction 5-[(5-phospho-1-deoxy-D-ribulos-1-ylimino)methylamino]-1-(5-phospho-beta-D-ribosyl)imidazole-4-carboxamide + L-glutamine = D-erythro-1-(imidazol-4-yl)glycerol 3-phosphate + 5-amino-1-(5-phospho-beta-D-ribosyl)imidazole-4-carboxamide + L-glutamate + H(+). The enzyme catalyses L-glutamine + H2O = L-glutamate + NH4(+). Its pathway is amino-acid biosynthesis; L-histidine biosynthesis; L-histidine from 5-phospho-alpha-D-ribose 1-diphosphate: step 5/9. In terms of biological role, IGPS catalyzes the conversion of PRFAR and glutamine to IGP, AICAR and glutamate. The HisH subunit catalyzes the hydrolysis of glutamine to glutamate and ammonia as part of the synthesis of IGP and AICAR. The resulting ammonia molecule is channeled to the active site of HisF. This is Imidazole glycerol phosphate synthase subunit HisH from Bacteroides fragilis (strain YCH46).